The primary structure comprises 194 residues: Putative NAD(P)H nitroreductase YfhC (194 aa).

FMN is bound by residues 20 to 22 (RRS), 147 to 148 (KI), and Arg188.

It belongs to the nitroreductase family. It depends on FMN as a cofactor.

This Bacillus subtilis (strain 168) protein is Putative NAD(P)H nitroreductase YfhC (yfhC).